Here is a 238-residue protein sequence, read N- to C-terminus: Large ribosomal subunit protein uL5c (238 aa).

Belongs to the universal ribosomal protein uL5 family. In terms of assembly, part of the 50S ribosomal subunit; contacts the 5S rRNA.

It is found in the plastid. The protein localises to the chloroplast. In terms of biological role, binds 5S rRNA, forms part of the central protuberance of the 50S subunit. This chain is Large ribosomal subunit protein uL5c (rpl5), found in Trieres chinensis (Marine centric diatom).